We begin with the raw amino-acid sequence, 145 residues long: D-aminoacyl-tRNA deacylase (145 aa).

The Gly-cisPro motif, important for rejection of L-amino acids signature appears at 137–138; that stretch reads GP.

This sequence belongs to the DTD family. As to quaternary structure, homodimer.

It is found in the cytoplasm. It catalyses the reaction glycyl-tRNA(Ala) + H2O = tRNA(Ala) + glycine + H(+). It carries out the reaction a D-aminoacyl-tRNA + H2O = a tRNA + a D-alpha-amino acid + H(+). An aminoacyl-tRNA editing enzyme that deacylates mischarged D-aminoacyl-tRNAs. Also deacylates mischarged glycyl-tRNA(Ala), protecting cells against glycine mischarging by AlaRS. Acts via tRNA-based rather than protein-based catalysis; rejects L-amino acids rather than detecting D-amino acids in the active site. By recycling D-aminoacyl-tRNA to D-amino acids and free tRNA molecules, this enzyme counteracts the toxicity associated with the formation of D-aminoacyl-tRNA entities in vivo and helps enforce protein L-homochirality. The polypeptide is D-aminoacyl-tRNA deacylase (Brevibacillus brevis (strain 47 / JCM 6285 / NBRC 100599)).